A 292-amino-acid chain; its full sequence is Insulin-like growth factor-binding protein 3 (292 aa).

The first 27 residues, 1 to 27 (MHPARPALWAAALTALTLLRGPPVARA), serve as a signal peptide directing secretion. The IGFBP N-terminal domain occupies 36–119 (PVVRCEPCDA…LNGRGFCANA (84 aa)). Cystine bridges form between cysteine 40-cysteine 69, cysteine 43-cysteine 71, cysteine 51-cysteine 72, cysteine 60-cysteine 75, cysteine 83-cysteine 96, and cysteine 90-cysteine 116. 2 N-linked (GlcNAc...) asparagine glycosylation sites follow: asparagine 118 and asparagine 137. Disordered stretches follow at residues 128-152 (YLPS…SVES) and 178-212 (KGHA…TEYG). Serine 149 bears the Phosphoserine mark. Residues 178 to 191 (KGHARDSQRYKVDY) are compositionally biased toward basic and acidic residues. The span at 192 to 203 (ESQSTDTQNFSS) shows a compositional bias: polar residues. N-linked (GlcNAc...) asparagine glycosylation occurs at asparagine 200. Serine 202 is subject to Phosphoserine. In terms of domain architecture, Thyroglobulin type-1 spans 211-286 (YGPCRREMED…DTKGKDDVHC (76 aa)). Cystine bridges form between cysteine 214-cysteine 241, cysteine 252-cysteine 263, and cysteine 265-cysteine 286.

In terms of assembly, interacts with XLKD1. Binds IGF2 more than IGF1. Forms a ternary complex of about 140 to 150 kDa with IGF1 or IGF2 and a 85 kDa glycoprotein (ALS). Interacts with TMEM219. In terms of processing, phosphorylated by FAM20C in the extracellular medium.

The protein resides in the secreted. Its function is as follows. IGF-binding proteins prolong the half-life of the IGFs and have been shown to either inhibit or stimulate the growth promoting effects of the IGFs on cell culture. They alter the interaction of IGFs with their cell surface receptors. Also exhibits IGF-independent antiproliferative and apoptotic effects mediated by its receptor TMEM219/IGFBP-3R. Promotes testicular germ cell apoptosis. In Mus musculus (Mouse), this protein is Insulin-like growth factor-binding protein 3 (Igfbp3).